The primary structure comprises 273 residues: 2,3,4,5-tetrahydropyridine-2,6-dicarboxylate N-succinyltransferase (273 aa).

Substrate is bound by residues Arg-104 and Asp-141.

This sequence belongs to the transferase hexapeptide repeat family. In terms of assembly, homotrimer.

It is found in the cytoplasm. The enzyme catalyses (S)-2,3,4,5-tetrahydrodipicolinate + succinyl-CoA + H2O = (S)-2-succinylamino-6-oxoheptanedioate + CoA. It participates in amino-acid biosynthesis; L-lysine biosynthesis via DAP pathway; LL-2,6-diaminopimelate from (S)-tetrahydrodipicolinate (succinylase route): step 1/3. In Acinetobacter baylyi (strain ATCC 33305 / BD413 / ADP1), this protein is 2,3,4,5-tetrahydropyridine-2,6-dicarboxylate N-succinyltransferase.